The chain runs to 512 residues: Histidine ammonia-lyase (512 aa).

Positions 142-144 form a cross-link, 5-imidazolinone (Ala-Gly); it reads ASG. Serine 143 bears the 2,3-didehydroalanine (Ser) mark.

The protein belongs to the PAL/histidase family. Contains an active site 4-methylidene-imidazol-5-one (MIO), which is formed autocatalytically by cyclization and dehydration of residues Ala-Ser-Gly.

It is found in the cytoplasm. It carries out the reaction L-histidine = trans-urocanate + NH4(+). It participates in amino-acid degradation; L-histidine degradation into L-glutamate; N-formimidoyl-L-glutamate from L-histidine: step 1/3. This chain is Histidine ammonia-lyase, found in Allorhizobium ampelinum (strain ATCC BAA-846 / DSM 112012 / S4) (Agrobacterium vitis (strain S4)).